A 169-amino-acid chain; its full sequence is Ribosome maturation factor RimM (169 aa).

The PRC barrel domain maps to 94–168; that stretch reads EEGQYYYHQI…KVIVELLEGL (75 aa).

The protein belongs to the RimM family. In terms of assembly, binds ribosomal protein uS19.

Its subcellular location is the cytoplasm. Functionally, an accessory protein needed during the final step in the assembly of 30S ribosomal subunit, possibly for assembly of the head region. Essential for efficient processing of 16S rRNA. May be needed both before and after RbfA during the maturation of 16S rRNA. It has affinity for free ribosomal 30S subunits but not for 70S ribosomes. The chain is Ribosome maturation factor RimM from Limosilactobacillus fermentum (strain NBRC 3956 / LMG 18251) (Lactobacillus fermentum).